The chain runs to 422 residues: SH2 domain-containing protein 4A (422 aa).

A phosphoserine mark is found at serine 117 and serine 123. Disordered stretches follow at residues 141 to 190 and 202 to 282; these read PQNV…EDEK and SEWQ…VIRT. Basic and acidic residues-rich tracts occupy residues 163–190 and 212–231; these read TKKDDKAQTKDLTKKKDSEELKQTEDEK and KAADEKRRSLAKQAREDYKR. Serine 233 is subject to Phosphoserine. The SH2 domain occupies 316–408; sequence WFHGILTLKK…LGKELLLFPC (93 aa).

As to quaternary structure, interacts with ESR1.

The protein localises to the cytoplasm. Inhibits estrogen-induced cell proliferation by competing with PLCG for binding to ESR1, blocking the effect of estrogen on PLCG and repressing estrogen-induced proliferation. May play a role in T-cell development and function. This Rattus norvegicus (Rat) protein is SH2 domain-containing protein 4A (Sh2d4a).